The chain runs to 681 residues: DNA-directed RNA polymerase subunit beta' (681 aa).

4 residues coordinate Zn(2+): Cys69, Cys71, Cys87, and Cys90. Mg(2+)-binding residues include Asp489, Asp491, and Asp493.

It belongs to the RNA polymerase beta' chain family. RpoC1 subfamily. In terms of assembly, in plastids the minimal PEP RNA polymerase catalytic core is composed of four subunits: alpha, beta, beta', and beta''. When a (nuclear-encoded) sigma factor is associated with the core the holoenzyme is formed, which can initiate transcription. Requires Mg(2+) as cofactor. It depends on Zn(2+) as a cofactor.

It is found in the plastid. The protein resides in the chloroplast. It carries out the reaction RNA(n) + a ribonucleoside 5'-triphosphate = RNA(n+1) + diphosphate. In terms of biological role, DNA-dependent RNA polymerase catalyzes the transcription of DNA into RNA using the four ribonucleoside triphosphates as substrates. This is DNA-directed RNA polymerase subunit beta' from Nicotiana sylvestris (Wood tobacco).